The sequence spans 884 residues: Alanine--tRNA ligase (884 aa).

H574, H578, C675, and H679 together coordinate Zn(2+).

Belongs to the class-II aminoacyl-tRNA synthetase family. Zn(2+) is required as a cofactor.

It localises to the cytoplasm. The enzyme catalyses tRNA(Ala) + L-alanine + ATP = L-alanyl-tRNA(Ala) + AMP + diphosphate. Its function is as follows. Catalyzes the attachment of alanine to tRNA(Ala) in a two-step reaction: alanine is first activated by ATP to form Ala-AMP and then transferred to the acceptor end of tRNA(Ala). Also edits incorrectly charged Ser-tRNA(Ala) and Gly-tRNA(Ala) via its editing domain. The sequence is that of Alanine--tRNA ligase from Ralstonia nicotianae (strain ATCC BAA-1114 / GMI1000) (Ralstonia solanacearum).